Consider the following 298-residue polypeptide: Mimecan (298 aa).

A signal peptide spans 1–20 (MKTLQSTLLLLLFVPLIKPA). An N-linked (GlcNAc...) (keratan sulfate) asparagine glycan is attached at Asn88. 7 LRR repeats span residues 112–131 (DAVP…FNKI), 132–155 (KKLT…GNLI), 156–179 (EDIE…ENQL), 180–199 (LKLP…YNKI), 200–225 (KSRG…HNAL), 226–246 (ESVP…FNNI), and 247–277 (ASIT…GNPI). An N-linked (GlcNAc...) (keratan sulfate) asparagine glycan is attached at Asn214. A disulfide bond links Cys255 and Cys288. The N-linked (GlcNAc...) (keratan sulfate) asparagine glycan is linked to Asn258.

This sequence belongs to the small leucine-rich proteoglycan (SLRP) family. SLRP class III subfamily. In terms of processing, contains keratan sulfate.

It localises to the secreted. The protein localises to the extracellular space. The protein resides in the extracellular matrix. Functionally, induces bone formation in conjunction with TGF-beta-1 or TGF-beta-2. In Pongo abelii (Sumatran orangutan), this protein is Mimecan (OGN).